The primary structure comprises 827 residues: Xanthomonalisin (827 aa).

Residues Met1–Ala23 form the signal peptide. The propeptide at Glu24–Ala237 is removed in mature form. Residues Ala241–Asn625 form the Peptidase S53 domain. Active-site charge relay system residues include Glu312, Asp316, and Ser544. Residues Asp585, Val586, Ala601, Gly603, and Asp605 each contribute to the Ca(2+) site. The region spanning Thr635–Gly722 is the PKD domain. Residues Asn636 to Asn827 constitute a propeptide, removed in mature form.

Ca(2+) serves as cofactor. Post-translationally, autocatalytically processed.

The protein localises to the secreted. It carries out the reaction Cleavage of casein.. Its activity is regulated as follows. Inhibited by 1,2-epoxy-3-(p-nitrophenoxy)propane (EPNP), but not by pepstatin, pepstatin Ac (S-PI) and diazoacetyl-DL-norleucine methyl ester (DAN). Not inhibited by metal ions. Functionally, pepstatin-insensitive serine-carboxyl proteinase. Shows activity on acid-denatured hemoglobin and on casein. This chain is Xanthomonalisin, found in Xanthomonas sp. (strain T-22).